Consider the following 439-residue polypeptide: Probable guanine deaminase (439 aa).

Residues histidine 76 and histidine 78 each coordinate Zn(2+). Substrate-binding positions include 78–81 (HYPQ), 203–204 (RF), 231–234 (HINE), and aspartate 321. 2 residues coordinate Zn(2+): histidine 231 and aspartate 321.

It belongs to the metallo-dependent hydrolases superfamily. ATZ/TRZ family. Requires Zn(2+) as cofactor.

It catalyses the reaction guanine + H2O + H(+) = xanthine + NH4(+). It functions in the pathway purine metabolism; guanine degradation; xanthine from guanine: step 1/1. Functionally, catalyzes the hydrolytic deamination of guanine, producing xanthine and ammonia. This Deinococcus radiodurans (strain ATCC 13939 / DSM 20539 / JCM 16871 / CCUG 27074 / LMG 4051 / NBRC 15346 / NCIMB 9279 / VKM B-1422 / R1) protein is Probable guanine deaminase (guaD).